The chain runs to 496 residues: 1-aminocyclopropane-1-carboxylate synthase 4 (496 aa).

Lys300 carries the post-translational modification N6-(pyridoxal phosphate)lysine.

The protein belongs to the class-I pyridoxal-phosphate-dependent aminotransferase family. It depends on pyridoxal 5'-phosphate as a cofactor. In terms of tissue distribution, expressed in leaves. Expressed in shoots and leaf blades. Expressed at low levels in leaf sheaths.

It catalyses the reaction S-adenosyl-L-methionine = 1-aminocyclopropane-1-carboxylate + S-methyl-5'-thioadenosine + H(+). It functions in the pathway alkene biosynthesis; ethylene biosynthesis via S-adenosyl-L-methionine; ethylene from S-adenosyl-L-methionine: step 1/2. Its function is as follows. Catalyzes the formation of 1-aminocyclopropane-1-carboxylate, a direct precursor of ethylene in higher plants. In Oryza sativa subsp. japonica (Rice), this protein is 1-aminocyclopropane-1-carboxylate synthase 4.